A 360-amino-acid chain; its full sequence is MIIWLAELLQPYFSFFRLFEYLSFRAIVSILTALGISLWMGPRMIKRLQMLQIGQVVRNEGPESHFSKRGTPTMGGVMILAAITITVLLWADLTNPYVWAVLAVLLGYGAVGFVDDYRKVVRKNTDGLIARWKYFWQSAIALVVAFALYAHGQDTAATQLVVPFFKDVMPQLGLMYIVLTYFVIVGTSNAVNLTDGLDGLAIMPTVLVAAGFAAIAWATGNVNFANYLHIPYIPHSSELVVVCTAMVGAGLGFLWFNTYPAQVFMGDVGALALGGALGTIAVLVRQEFVLVIMGGVFVMETLSVILQVGSYKLRGQRIFRMAPIHHHYELKGWPEPRVIVRFWVISIVLVLIGLATLKVR.

10 helical membrane-spanning segments follow: residues 21-41, 73-93, 94-114, 132-152, 168-188, 199-219, 239-259, 263-283, 288-308, and 338-358; these read YLSF…LWMG, TMGG…WADL, TNPY…VGFV, WKYF…YAHG, VMPQ…VGTS, GLAI…AWAT, LVVV…FNTY, VFMG…IAVL, FVLV…ILQV, and VIVR…ATLK.

The protein belongs to the glycosyltransferase 4 family. MraY subfamily. Requires Mg(2+) as cofactor.

The protein resides in the cell inner membrane. The enzyme catalyses UDP-N-acetyl-alpha-D-muramoyl-L-alanyl-gamma-D-glutamyl-meso-2,6-diaminopimeloyl-D-alanyl-D-alanine + di-trans,octa-cis-undecaprenyl phosphate = di-trans,octa-cis-undecaprenyl diphospho-N-acetyl-alpha-D-muramoyl-L-alanyl-D-glutamyl-meso-2,6-diaminopimeloyl-D-alanyl-D-alanine + UMP. Its pathway is cell wall biogenesis; peptidoglycan biosynthesis. Functionally, catalyzes the initial step of the lipid cycle reactions in the biosynthesis of the cell wall peptidoglycan: transfers peptidoglycan precursor phospho-MurNAc-pentapeptide from UDP-MurNAc-pentapeptide onto the lipid carrier undecaprenyl phosphate, yielding undecaprenyl-pyrophosphoryl-MurNAc-pentapeptide, known as lipid I. This chain is Phospho-N-acetylmuramoyl-pentapeptide-transferase, found in Vibrio cholerae serotype O1 (strain ATCC 39541 / Classical Ogawa 395 / O395).